The following is a 439-amino-acid chain: Proline--tRNA ligase (439 aa).

It belongs to the class-II aminoacyl-tRNA synthetase family. ProS type 2 subfamily. Homodimer.

It localises to the cytoplasm. The enzyme catalyses tRNA(Pro) + L-proline + ATP = L-prolyl-tRNA(Pro) + AMP + diphosphate. Its function is as follows. Catalyzes the attachment of proline to tRNA(Pro) in a two-step reaction: proline is first activated by ATP to form Pro-AMP and then transferred to the acceptor end of tRNA(Pro). This is Proline--tRNA ligase from Hyphomonas neptunium (strain ATCC 15444).